The chain runs to 359 residues: MASRYLTLAAALLASFLQVDIEANSWWSLAMNPVQIPEAYIVGAQPLCSQLAGLSPGQKKLCQLYQDHMQYIGEGAKTGIKECQYQFRHRRWNCSTVDNISVFGRVMQIGSRETAFTYSISAAGVVNAVSRACRAGELSTCGCSRARRPKDLQRDWLWGGCGDNLDYGYRFAKEFVDAREREKIHQKGSYESSRTLMNLHNNEAGRRTVYNLADVACKCHGVSGSCSLKTCWLQLADFRKVGDFLKEKYDSAASMKLNSRGKLVQVNSRFNPPTTNDLVYVDPSPDYCVRNESTGSMGTQGRLCNKTSEGMDGCELMCCGRGYDQFKTVQTERCHCKFHWCCYVKCKKCTEIVDQFVCK.

The N-terminal stretch at 1–20 is a signal peptide; sequence MASRYLTLAAALLASFLQVD. Cysteines 83 and 94 form a disulfide. 2 N-linked (GlcNAc...) asparagine glycosylation sites follow: Asn93 and Asn99. 10 cysteine pairs are disulfide-bonded: Cys133-Cys141, Cys143-Cys161, Cys217-Cys231, Cys219-Cys226, Cys288-Cys319, Cys304-Cys314, Cys318-Cys358, Cys334-Cys349, Cys336-Cys346, and Cys341-Cys342. Ser223 carries O-palmitoleoyl serine; by PORCN lipidation. N-linked (GlcNAc...) asparagine glycans are attached at residues Asn291 and Asn305.

The protein belongs to the Wnt family. Post-translationally, palmitoleoylation is required for efficient binding to frizzled receptors. Depalmitoleoylation leads to Wnt signaling pathway inhibition.

The protein localises to the secreted. The protein resides in the extracellular space. It localises to the extracellular matrix. In terms of biological role, ligand for members of the frizzled family of seven transmembrane receptors. Can activate or inhibit canonical Wnt signaling, depending on receptor context. Required during embryogenesis for extension of the primary anterior-posterior axis. This chain is Protein Wnt-5a (WNT5A), found in Pleurodeles waltl (Iberian ribbed newt).